Reading from the N-terminus, the 475-residue chain is Aspartyl/glutamyl-tRNA(Asn/Gln) amidotransferase subunit B (475 aa).

It belongs to the GatB/GatE family. GatB subfamily. As to quaternary structure, heterotrimer of A, B and C subunits.

The enzyme catalyses L-glutamyl-tRNA(Gln) + L-glutamine + ATP + H2O = L-glutaminyl-tRNA(Gln) + L-glutamate + ADP + phosphate + H(+). It carries out the reaction L-aspartyl-tRNA(Asn) + L-glutamine + ATP + H2O = L-asparaginyl-tRNA(Asn) + L-glutamate + ADP + phosphate + 2 H(+). Its function is as follows. Allows the formation of correctly charged Asn-tRNA(Asn) or Gln-tRNA(Gln) through the transamidation of misacylated Asp-tRNA(Asn) or Glu-tRNA(Gln) in organisms which lack either or both of asparaginyl-tRNA or glutaminyl-tRNA synthetases. The reaction takes place in the presence of glutamine and ATP through an activated phospho-Asp-tRNA(Asn) or phospho-Glu-tRNA(Gln). This is Aspartyl/glutamyl-tRNA(Asn/Gln) amidotransferase subunit B from Bacillus cereus (strain B4264).